The sequence spans 238 residues: MRPAGRSNNQVRPVTLTRNYTKHAEGSVLVEFGDTKVLCTASIEEGVPRFLKGQGQGWITAEYGMLPRSTHTRNAREAAKGKQGGRTMEIQRLIARALRAAVDLKALGEFTITLDCDVLQADGGTRTASITGACVALVDALQKLVENGKLKTNPMKGMVAAVSVGIVNGEAVCDLEYVEDSAAETDMNVVMTEDGRIIEVQGTAEGEPFTHEELLILLALARGGIESIVATQKAALAN.

Phosphate contacts are provided by residues arginine 86 and 124 to 126 (GTR).

This sequence belongs to the RNase PH family. As to quaternary structure, homodimer. Has a tendency to aggregate into multimers. Mg(2+) is required as a cofactor.

It catalyses the reaction tRNA(n+1) + phosphate = tRNA(n) + a ribonucleoside 5'-diphosphate. Phosphorolytic exoribonuclease that plays an important role in tRNA 3'-end maturation; has no activity on a tRNA precursor with a 3'-terminal phosphate group. In vitro is freely reversible, adds nucleotides to the ends of RNA molecules by using nucleoside diphosphates as substrates, but this may not be physiologically important. Probably plays a role in initiation of 16S rRNA degradation (leading to ribosome degradation) during starvation. The sequence is that of Ribonuclease PH from Escherichia coli (strain K12 / MC4100 / BW2952).